Here is a 188-residue protein sequence, read N- to C-terminus: Xanthine phosphoribosyltransferase (188 aa).

Residues leucine 20 and asparagine 27 each coordinate xanthine. 127-131 (AHGEA) contacts 5-phospho-alpha-D-ribose 1-diphosphate. Position 155 (lysine 155) interacts with xanthine.

Belongs to the purine/pyrimidine phosphoribosyltransferase family. Xpt subfamily. Homodimer.

The protein resides in the cytoplasm. The catalysed reaction is XMP + diphosphate = xanthine + 5-phospho-alpha-D-ribose 1-diphosphate. It participates in purine metabolism; XMP biosynthesis via salvage pathway; XMP from xanthine: step 1/1. Functionally, converts the preformed base xanthine, a product of nucleic acid breakdown, to xanthosine 5'-monophosphate (XMP), so it can be reused for RNA or DNA synthesis. The sequence is that of Xanthine phosphoribosyltransferase from Heliobacterium modesticaldum (strain ATCC 51547 / Ice1).